Here is a 608-residue protein sequence, read N- to C-terminus: Serine/threonine-protein kinase BUR1 (608 aa).

The region spanning 39-346 (YEIIQKLGQG…ALDALNHNYF (308 aa)) is the Protein kinase domain. Residues 45–53 (LGQGTFGVV) and lysine 68 contribute to the ATP site. Aspartate 174 functions as the Proton acceptor in the catalytic mechanism. Disordered regions lie at residues 383–419 (HEANKIPKAHFPKGPGEYNNSNNYPRNRNGSFPLALP) and 443–571 (YIPK…FDED). The span at 400–411 (YNNSNNYPRNRN) shows a compositional bias: low complexity. Positions 471–482 (LRDRSPRREGHI) are enriched in basic and acidic residues. The segment covering 487–502 (STTNSNNISSNSSASN) has biased composition (low complexity). Polar residues-rich tracts occupy residues 503–512 (VGGTLSNPTH) and 539–548 (PQSSSRNVSD). Acidic residues predominate over residues 559–571 (EQNESDLTDFDED).

Belongs to the protein kinase superfamily. CMGC Ser/Thr protein kinase family. CDC2/CDKX subfamily.

The protein localises to the nucleus. The enzyme catalyses L-seryl-[protein] + ATP = O-phospho-L-seryl-[protein] + ADP + H(+). The catalysed reaction is L-threonyl-[protein] + ATP = O-phospho-L-threonyl-[protein] + ADP + H(+). It carries out the reaction [DNA-directed RNA polymerase] + ATP = phospho-[DNA-directed RNA polymerase] + ADP + H(+). In terms of biological role, serine/threonine-protein kinase involved in transcription regulation. Phosphorylates the UBC2/RAD6 ubiquitin-conjugating enzyme (E2), leading to monoubiquitination of histone H2B and the silencing of telomeric-associated genes. Also required for histone H3 methylation. Necessary for the recovery from pheromone-induced growth arrest in the cell cycle G1 phase. The chain is Serine/threonine-protein kinase BUR1 (BUR1) from Debaryomyces hansenii (strain ATCC 36239 / CBS 767 / BCRC 21394 / JCM 1990 / NBRC 0083 / IGC 2968) (Yeast).